We begin with the raw amino-acid sequence, 186 residues long: Ribosome-recycling factor (186 aa).

Belongs to the RRF family.

Its subcellular location is the cytoplasm. Functionally, responsible for the release of ribosomes from messenger RNA at the termination of protein biosynthesis. May increase the efficiency of translation by recycling ribosomes from one round of translation to another. The chain is Ribosome-recycling factor from Albidiferax ferrireducens (strain ATCC BAA-621 / DSM 15236 / T118) (Rhodoferax ferrireducens).